We begin with the raw amino-acid sequence, 262 residues long: Leucine-rich repeat-containing protein 18 (262 aa).

LRR repeat units lie at residues 28-49 (GRKR…ILRL), 51-72 (DIDE…IAKF), 74-95 (NLRW…IGQM), 97-118 (SLLF…VELN), 122-144 (NIRT…GALK), 145-167 (ELHE…AKLP), and 168-189 (KLKK…EMFV).

In terms of tissue distribution, exclusively expressed in spermatocytes and roud spermatids within seminiferous tubules during spermatogenesis.

It localises to the cytoplasm. May be involved in the regulation of spermatogenesis and sperm maturation. In Mus musculus (Mouse), this protein is Leucine-rich repeat-containing protein 18 (Lrrc18).